Here is a 213-residue protein sequence, read N- to C-terminus: Imidazole glycerol phosphate synthase subunit HisH 1 (213 aa).

Positions 3 to 213 (SVSIVDYGVG…LSIIQQFLQI (211 aa)) constitute a Glutamine amidotransferase type-1 domain. The active-site Nucleophile is the C81. Active-site residues include H195 and E197.

Heterodimer of HisH and HisF.

The protein localises to the cytoplasm. It catalyses the reaction 5-[(5-phospho-1-deoxy-D-ribulos-1-ylimino)methylamino]-1-(5-phospho-beta-D-ribosyl)imidazole-4-carboxamide + L-glutamine = D-erythro-1-(imidazol-4-yl)glycerol 3-phosphate + 5-amino-1-(5-phospho-beta-D-ribosyl)imidazole-4-carboxamide + L-glutamate + H(+). It carries out the reaction L-glutamine + H2O = L-glutamate + NH4(+). The protein operates within amino-acid biosynthesis; L-histidine biosynthesis; L-histidine from 5-phospho-alpha-D-ribose 1-diphosphate: step 5/9. IGPS catalyzes the conversion of PRFAR and glutamine to IGP, AICAR and glutamate. The HisH subunit provides the glutamine amidotransferase activity that produces the ammonia necessary to HisF for the synthesis of IGP and AICAR. The sequence is that of Imidazole glycerol phosphate synthase subunit HisH 1 from Legionella pneumophila (strain Paris).